Here is a 532-residue protein sequence, read N- to C-terminus: MKYIVVTGGVMSGLGKGITAASIGRLFVDMGYRVIPIKIDPYINIDAGTMNPFQHGEVYVLKDGTEVDLDLGHYERFIGEEVTGDHNITTGKIYKRVIEKERKGDYLGQTVQIIPHVTDEIKSWIRRVAKESNAEICLVEIGGTVGDIEGMPFLEAIRQMHNEEKEEDFALVHVTLVPLDAGGEQKTKPTQHSVKELRELGLHPDVIVGRCSERLKPATKKKIALFCDVPEEAVISNEDAEDIYEVPLIFKREKLDEYLMRKLNLRAKESRKEWEEMVKRMKTLYEEASIAIVGKYVDVRDAYLSIKEALKHGGIEAGCKVNIVWVDSEDLENVDDFTLDVDGILVPGGFGARGAEGKIRAIEYARENGVPFLGICFGFQLAVIEFARNVVGFSEANSTELDENTPHPVIDLLPEQKGIDEMGGTMRLGDIEVTIKPGTIAHKLYGSEKVVERHRHRYEVNPEYIEKIESKGLVFSAYSDGGRRMEIAELPDHPFFFATQFHPEFKSRPYRPSPPFVGFVRAALKYRREEEI.

Residues 1–265 are amidoligase domain; the sequence is MKYIVVTGGV…DEYLMRKLNL (265 aa). Residue Ser12 coordinates CTP. Position 12 (Ser12) interacts with UTP. Residues 13-18 and Asp70 contribute to the ATP site; that span reads GLGKGI. Residues Asp70 and Glu140 each coordinate Mg(2+). Residues 147–149, 186–191, and Lys222 each bind CTP; these read DIE and KTKPTQ. UTP-binding positions include 186–191 and Lys222; that span reads KTKPTQ. One can recognise a Glutamine amidotransferase type-1 domain in the interval 289–529; sequence SIAIVGKYVD…VRAALKYRRE (241 aa). An L-glutamine-binding site is contributed by Gly349. Cys376 functions as the Nucleophile; for glutamine hydrolysis in the catalytic mechanism. L-glutamine is bound by residues 377–380, Glu400, and Arg457; that span reads FGFQ. Residues His502 and Glu504 contribute to the active site.

The protein belongs to the CTP synthase family. Homotetramer.

The enzyme catalyses UTP + L-glutamine + ATP + H2O = CTP + L-glutamate + ADP + phosphate + 2 H(+). It carries out the reaction L-glutamine + H2O = L-glutamate + NH4(+). It catalyses the reaction UTP + NH4(+) + ATP = CTP + ADP + phosphate + 2 H(+). It functions in the pathway pyrimidine metabolism; CTP biosynthesis via de novo pathway; CTP from UDP: step 2/2. Allosterically activated by GTP, when glutamine is the substrate; GTP has no effect on the reaction when ammonia is the substrate. The allosteric effector GTP functions by stabilizing the protein conformation that binds the tetrahedral intermediate(s) formed during glutamine hydrolysis. Inhibited by the product CTP, via allosteric rather than competitive inhibition. In terms of biological role, catalyzes the ATP-dependent amination of UTP to CTP with either L-glutamine or ammonia as the source of nitrogen. Regulates intracellular CTP levels through interactions with the four ribonucleotide triphosphates. The chain is CTP synthase from Archaeoglobus fulgidus (strain ATCC 49558 / DSM 4304 / JCM 9628 / NBRC 100126 / VC-16).